A 253-amino-acid chain; its full sequence is Phosphate import ATP-binding protein PstB (253 aa).

The ABC transporter domain occupies 5 to 248 (IETINLHVYY…PEHELTEKYV (244 aa)). Position 37 to 44 (37 to 44 (GPSGCGKS)) interacts with ATP.

The protein belongs to the ABC transporter superfamily. Phosphate importer (TC 3.A.1.7) family. As to quaternary structure, the complex is composed of two ATP-binding proteins (PstB), two transmembrane proteins (PstC and PstA) and a solute-binding protein (PstS).

The protein localises to the cell membrane. It carries out the reaction phosphate(out) + ATP + H2O = ADP + 2 phosphate(in) + H(+). Its function is as follows. Part of the ABC transporter complex PstSACB involved in phosphate import. Responsible for energy coupling to the transport system. The protein is Phosphate import ATP-binding protein PstB of Pyrococcus furiosus (strain ATCC 43587 / DSM 3638 / JCM 8422 / Vc1).